The following is a 750-amino-acid chain: Photosystem I P700 chlorophyll a apoprotein A1 (750 aa).

The next 8 helical transmembrane spans lie at 70-93 (VFSAHFGQLSIIFLWLSGMYFHGA), 156-179 (LYCTAIGALVFAALMLFAGWFHYH), 195-219 (LNHHLAGLLGLGSLSWAGHQVHVSL), 291-309 (IAHHHLAIAILFLVAGHMY), 346-369 (WHAQLSLNLAMLGSLTIVVAHHMY), 385-411 (LSLFTHHMWIGGFLIVGAAAHAAIFMV), 433-455 (AIISHLNWVCIFLGFHSFGLYIH), and 531-549 (FLVHHIHAFTIHVTVLILL). [4Fe-4S] cluster-binding residues include C573 and C582. A run of 2 helical transmembrane segments spans residues 589-610 (HVFLGLFWMYNAISVVIFHFSW) and 664-686 (LSAYGLFFLGAHFVWAFSLMFLF). H675 provides a ligand contact to chlorophyll a'. Chlorophyll a is bound by residues M683 and Y691. W692 provides a ligand contact to phylloquinone. Residues 724 to 744 (AVGVTHYLLGGIATTWAFFLA) form a helical membrane-spanning segment.

It belongs to the PsaA/PsaB family. In terms of assembly, the PsaA/B heterodimer binds the P700 chlorophyll special pair and subsequent electron acceptors. PSI consists of a core antenna complex that captures photons, and an electron transfer chain that converts photonic excitation into a charge separation. The eukaryotic PSI reaction center is composed of at least 11 subunits. P700 is a chlorophyll a/chlorophyll a' dimer, A0 is one or more chlorophyll a, A1 is one or both phylloquinones and FX is a shared 4Fe-4S iron-sulfur center. is required as a cofactor.

Its subcellular location is the plastid. It localises to the chloroplast thylakoid membrane. It catalyses the reaction reduced [plastocyanin] + hnu + oxidized [2Fe-2S]-[ferredoxin] = oxidized [plastocyanin] + reduced [2Fe-2S]-[ferredoxin]. PsaA and PsaB bind P700, the primary electron donor of photosystem I (PSI), as well as the electron acceptors A0, A1 and FX. PSI is a plastocyanin-ferredoxin oxidoreductase, converting photonic excitation into a charge separation, which transfers an electron from the donor P700 chlorophyll pair to the spectroscopically characterized acceptors A0, A1, FX, FA and FB in turn. Oxidized P700 is reduced on the lumenal side of the thylakoid membrane by plastocyanin. The polypeptide is Photosystem I P700 chlorophyll a apoprotein A1 (Populus trichocarpa (Western balsam poplar)).